A 52-amino-acid chain; its full sequence is ERMES regulator 1 (52 aa).

The Mitochondrial intermembrane segment spans residues 1–27 (MIFFFNQIRSIFTALHTPTQQIQLSRR). The helical transmembrane segment at 28 to 46 (AFFQFLGYLGSCVVISLAA) threads the bilayer. At 47-52 (QSKYVQ) the chain is on the cytoplasmic side.

The protein belongs to the EMR1 family.

It is found in the mitochondrion outer membrane. In terms of biological role, mediates the formation of endoplasmic reticulum (ER)-mitochondria encounter structure (ERMES) foci, thereby contributing to the formation of ER-mitochondrial contact sites. In Saccharomyces cerevisiae (strain ATCC 204508 / S288c) (Baker's yeast), this protein is ERMES regulator 1.